The sequence spans 543 residues: Chaperonin GroEL (543 aa).

ATP is bound by residues 29 to 32, 86 to 90, G413, 476 to 478, and D492; these read TLGP, DGTTT, and NAA.

The protein belongs to the chaperonin (HSP60) family. Forms a cylinder of 14 subunits composed of two heptameric rings stacked back-to-back. Interacts with the co-chaperonin GroES.

The protein resides in the cytoplasm. The enzyme catalyses ATP + H2O + a folded polypeptide = ADP + phosphate + an unfolded polypeptide.. Together with its co-chaperonin GroES, plays an essential role in assisting protein folding. The GroEL-GroES system forms a nano-cage that allows encapsulation of the non-native substrate proteins and provides a physical environment optimized to promote and accelerate protein folding. The protein is Chaperonin GroEL of Brevibacillus choshinensis.